The sequence spans 181 residues: Large ribosomal subunit protein uL6 (181 aa).

This sequence belongs to the universal ribosomal protein uL6 family. Part of the 50S ribosomal subunit.

Functionally, this protein binds to the 23S rRNA, and is important in its secondary structure. It is located near the subunit interface in the base of the L7/L12 stalk, and near the tRNA binding site of the peptidyltransferase center. The chain is Large ribosomal subunit protein uL6 from Rhodopirellula baltica (strain DSM 10527 / NCIMB 13988 / SH1).